A 257-amino-acid chain; its full sequence is 1-(5-phosphoribosyl)-5-[(5-phosphoribosylamino)methylideneamino] imidazole-4-carboxamide isomerase (257 aa).

The active-site Proton acceptor is the aspartate 8. Residue aspartate 129 is the Proton donor of the active site.

The protein belongs to the HisA/HisF family.

Its subcellular location is the cytoplasm. It catalyses the reaction 1-(5-phospho-beta-D-ribosyl)-5-[(5-phospho-beta-D-ribosylamino)methylideneamino]imidazole-4-carboxamide = 5-[(5-phospho-1-deoxy-D-ribulos-1-ylimino)methylamino]-1-(5-phospho-beta-D-ribosyl)imidazole-4-carboxamide. The protein operates within amino-acid biosynthesis; L-histidine biosynthesis; L-histidine from 5-phospho-alpha-D-ribose 1-diphosphate: step 4/9. This chain is 1-(5-phosphoribosyl)-5-[(5-phosphoribosylamino)methylideneamino] imidazole-4-carboxamide isomerase, found in Crocosphaera subtropica (strain ATCC 51142 / BH68) (Cyanothece sp. (strain ATCC 51142)).